The chain runs to 382 residues: Mannitol-1-phosphate 5-dehydrogenase (382 aa).

3–14 (ALHFGAGNIGRG) contributes to the NAD(+) binding site. An N6-acetyllysine modification is found at K269.

The protein belongs to the mannitol dehydrogenase family.

The enzyme catalyses D-mannitol 1-phosphate + NAD(+) = beta-D-fructose 6-phosphate + NADH + H(+). The polypeptide is Mannitol-1-phosphate 5-dehydrogenase (Escherichia coli O17:K52:H18 (strain UMN026 / ExPEC)).